Reading from the N-terminus, the 150-residue chain is UPF0336 protein SGR_2883 (150 aa).

Positions 10–116 constitute a MaoC-like domain; that stretch reads RTYPPTPAYE…STIEAVKSLA (107 aa).

This sequence belongs to the UPF0336 family.

This chain is UPF0336 protein SGR_2883, found in Streptomyces griseus subsp. griseus (strain JCM 4626 / CBS 651.72 / NBRC 13350 / KCC S-0626 / ISP 5235).